Here is a 321-residue protein sequence, read N- to C-terminus: MRFKGLDLNLLVALDALMTERKLTAAARSINLSQPAMSAAITRLRTYFRDELFTMNGRELVPTPRAEALAPAVREALLHIHLSIISWDPFNPAQSDRSFRIILSDFMTLMFFERVVVRVAREAPAVSFELLPFSDEPDELLRRGDVDFLILPEMFMSHTHPRAKLFDERFVCVSCPTNQKLPPQLSIDNYVSMGHVAAQFGKQRPSVEEWLLREHGLRRRVEVAVPGFTMIPPFLSGTDRIATLPLRLAMHFAKAIPLRITELPQPIFPAFTEAVQWPAPHSSDPASLWMREIFLQEASRVEFQSETSAHALSSSQLPTCL.

Residues 6-63 (LDLNLLVALDALMTERKLTAAARSINLSQPAMSAAITRLRTYFRDELFTMNGRELVPT) enclose the HTH lysR-type domain. The segment at residues 23–42 (LTAAARSINLSQPAMSAAIT) is a DNA-binding region (H-T-H motif).

This sequence belongs to the LysR transcriptional regulatory family.

Functionally, nodD regulates the expression of the nodABCFE genes which encode other nodulation proteins. NodD is also a negative regulator of its own expression. Binds flavonoids as inducers. This is Nodulation protein D 1 (nodD1) from Bradyrhizobium japonicum.